We begin with the raw amino-acid sequence, 260 residues long: 5'-nucleotidase SurE (260 aa).

Residues Asp19, Asp20, Ser51, and Asn104 each contribute to the a divalent metal cation site.

It belongs to the SurE nucleotidase family. It depends on a divalent metal cation as a cofactor.

It is found in the cytoplasm. The enzyme catalyses a ribonucleoside 5'-phosphate + H2O = a ribonucleoside + phosphate. Functionally, nucleotidase that shows phosphatase activity on nucleoside 5'-monophosphates. The polypeptide is 5'-nucleotidase SurE (Paramagnetospirillum magneticum (strain ATCC 700264 / AMB-1) (Magnetospirillum magneticum)).